Reading from the N-terminus, the 194-residue chain is Outer-membrane lipoprotein LolB (194 aa).

Positions 1 to 18 (MTLLLRLFTLGCLLLLAG) are cleaved as a signal peptide. Residue cysteine 19 is the site of N-palmitoyl cysteine attachment. A lipid anchor (S-diacylglycerol cysteine) is attached at cysteine 19.

It belongs to the LolB family. As to quaternary structure, monomer.

The protein resides in the cell outer membrane. Its function is as follows. Plays a critical role in the incorporation of lipoproteins in the outer membrane after they are released by the LolA protein. In Aeromonas hydrophila subsp. hydrophila (strain ATCC 7966 / DSM 30187 / BCRC 13018 / CCUG 14551 / JCM 1027 / KCTC 2358 / NCIMB 9240 / NCTC 8049), this protein is Outer-membrane lipoprotein LolB.